The following is a 70-amino-acid chain: Large ribosomal subunit protein bL31 (70 aa).

Positions 16, 18, 37, and 40 each coordinate Zn(2+).

The protein belongs to the bacterial ribosomal protein bL31 family. Type A subfamily. In terms of assembly, part of the 50S ribosomal subunit. Zn(2+) serves as cofactor.

In terms of biological role, binds the 23S rRNA. This chain is Large ribosomal subunit protein bL31, found in Shewanella halifaxensis (strain HAW-EB4).